Here is a 44-residue protein sequence, read N- to C-terminus: Photosystem I reaction center subunit IX (44 aa).

Residues 7-27 (YLSVAPVLSTLWFGSLAGLLI) traverse the membrane as a helical segment.

Belongs to the PsaJ family.

Its subcellular location is the plastid. The protein localises to the chloroplast thylakoid membrane. In terms of biological role, may help in the organization of the PsaE and PsaF subunits. In Arabis hirsuta (Hairy rock-cress), this protein is Photosystem I reaction center subunit IX.